Reading from the N-terminus, the 504-residue chain is MEQYQAYLELRRSRYQDILYPLFFRESIYGLAYAHESFFIENVDYNNKFSLLIVKRLSTRMYQQTHFILFVNDSKKNTFVGYNYHFFSQIILEGFGIVVEILFSLQLFSSSLRGLEIVKSYKNFQSIHSIFPFFEDQLIYLNHKSDIRIPYPIHLEILVQILRYSIKDVSFFHLIRLFFYYYYNWNSLFPPKKWIFTFFSKRNRRIFLFLYNLYVWEYESIFLFLRNKSSQLQLKHFRVFFERIFFYEKIKHLVEVSTKNCSYTFFFFKDTFIHYVRYQGKSILVLKNTPFLINKWKYYFIYLWQCHFDIWAGLETIYINELSQYSFHFLGYFLSIPLNLSVVRSQMLQNSFLIKIVIKKLDTIVPIIPLMRSLAKTKFCNVMGHPISKPVWANLSDFDIIDRFLRICRNFSHYYNGSAKKKSFYQIKYILRFSCIKTLARKHKSTVRIYLKKLSSEKLLEEFFTEEDLFSLIFPRTSFTLRRFYRGRIWYLDILLRNDFVNYL.

It belongs to the intron maturase 2 family. MatK subfamily.

The protein resides in the plastid. It is found in the chloroplast. In terms of biological role, usually encoded in the trnK tRNA gene intron. Probably assists in splicing its own and other chloroplast group II introns. This is Maturase K from Vigna unguiculata (Cowpea).